Reading from the N-terminus, the 161-residue chain is Ribosome maturation factor RimP (161 aa).

Belongs to the RimP family.

Its subcellular location is the cytoplasm. Functionally, required for maturation of 30S ribosomal subunits. This chain is Ribosome maturation factor RimP, found in Rickettsia conorii (strain ATCC VR-613 / Malish 7).